The following is a 355-amino-acid chain: Peptide chain release factor 1 (355 aa).

Glutamine 231 is modified (N5-methylglutamine). Positions 280 to 293 (KERKAKEQSERKDQ) are enriched in basic and acidic residues. The tract at residues 280–307 (KERKAKEQSERKDQVGTGDRSGRIRTYN) is disordered.

Belongs to the prokaryotic/mitochondrial release factor family. Methylated by PrmC. Methylation increases the termination efficiency of RF1.

It is found in the cytoplasm. Peptide chain release factor 1 directs the termination of translation in response to the peptide chain termination codons UAG and UAA. This chain is Peptide chain release factor 1, found in Campylobacter hominis (strain ATCC BAA-381 / DSM 21671 / CCUG 45161 / LMG 19568 / NCTC 13146 / CH001A).